A 358-amino-acid polypeptide reads, in one-letter code: UDP-N-acetylglucosamine--N-acetylmuramyl-(pentapeptide) pyrophosphoryl-undecaprenol N-acetylglucosamine transferase (358 aa).

Residues 10–12 (TGG), Asn-124, Arg-165, Ser-187, Ile-243, and Gln-288 contribute to the UDP-N-acetyl-alpha-D-glucosamine site.

This sequence belongs to the glycosyltransferase 28 family. MurG subfamily.

It localises to the cell inner membrane. It carries out the reaction di-trans,octa-cis-undecaprenyl diphospho-N-acetyl-alpha-D-muramoyl-L-alanyl-D-glutamyl-meso-2,6-diaminopimeloyl-D-alanyl-D-alanine + UDP-N-acetyl-alpha-D-glucosamine = di-trans,octa-cis-undecaprenyl diphospho-[N-acetyl-alpha-D-glucosaminyl-(1-&gt;4)]-N-acetyl-alpha-D-muramoyl-L-alanyl-D-glutamyl-meso-2,6-diaminopimeloyl-D-alanyl-D-alanine + UDP + H(+). It participates in cell wall biogenesis; peptidoglycan biosynthesis. Functionally, cell wall formation. Catalyzes the transfer of a GlcNAc subunit on undecaprenyl-pyrophosphoryl-MurNAc-pentapeptide (lipid intermediate I) to form undecaprenyl-pyrophosphoryl-MurNAc-(pentapeptide)GlcNAc (lipid intermediate II). This Syntrophotalea carbinolica (strain DSM 2380 / NBRC 103641 / GraBd1) (Pelobacter carbinolicus) protein is UDP-N-acetylglucosamine--N-acetylmuramyl-(pentapeptide) pyrophosphoryl-undecaprenol N-acetylglucosamine transferase.